Reading from the N-terminus, the 327-residue chain is Deoxyribonuclease (327 aa).

Residues 1–24 (MSKKLRNFLVRIIVAAFASFAVMA) constitute a signal peptide (or 35). A disordered region spans residues 299–327 (DSTTDEIENSVDDSEEIVYNDTTTEEEEN).

The catalysed reaction is Endonucleolytic cleavage to 5'-phosphodinucleotide and 5'-phosphooligonucleotide end-products.. Functionally, may have a role in S.equisimilis virulence. The chain is Deoxyribonuclease (sdc) from Streptococcus dysgalactiae subsp. equisimilis (Streptococcus equisimilis).